We begin with the raw amino-acid sequence, 368 residues long: Chaperone protein DnaJ (368 aa).

The J domain occupies Asp-5–Gly-69. The CR-type zinc finger occupies Gly-130–Arg-212. Cys-143, Cys-146, Cys-160, Cys-163, Cys-186, Cys-189, Cys-200, and Cys-203 together coordinate Zn(2+). CXXCXGXG motif repeat units lie at residues Cys-143–Gly-150, Cys-160–Gly-167, Cys-186–Gly-193, and Cys-200–Gly-207.

The protein belongs to the DnaJ family. Homodimer. Requires Zn(2+) as cofactor.

It localises to the cytoplasm. Functionally, participates actively in the response to hyperosmotic and heat shock by preventing the aggregation of stress-denatured proteins and by disaggregating proteins, also in an autonomous, DnaK-independent fashion. Unfolded proteins bind initially to DnaJ; upon interaction with the DnaJ-bound protein, DnaK hydrolyzes its bound ATP, resulting in the formation of a stable complex. GrpE releases ADP from DnaK; ATP binding to DnaK triggers the release of the substrate protein, thus completing the reaction cycle. Several rounds of ATP-dependent interactions between DnaJ, DnaK and GrpE are required for fully efficient folding. Also involved, together with DnaK and GrpE, in the DNA replication of plasmids through activation of initiation proteins. The polypeptide is Chaperone protein DnaJ (Bacillus mycoides (strain KBAB4) (Bacillus weihenstephanensis)).